The chain runs to 430 residues: Asparagine--tRNA ligase (430 aa).

Belongs to the class-II aminoacyl-tRNA synthetase family. In terms of assembly, homodimer.

The protein resides in the cytoplasm. It catalyses the reaction tRNA(Asn) + L-asparagine + ATP = L-asparaginyl-tRNA(Asn) + AMP + diphosphate + H(+). In Shouchella clausii (strain KSM-K16) (Alkalihalobacillus clausii), this protein is Asparagine--tRNA ligase.